We begin with the raw amino-acid sequence, 376 residues long: Probable ribonucleoside-diphosphate reductase small subunit 048L (376 aa).

Fe cation contacts are provided by D110, E140, and H143. Y147 is an active-site residue. 3 residues coordinate Fe cation: E217, E251, and H254.

The protein belongs to the ribonucleoside diphosphate reductase small chain family. As to quaternary structure, heterotetramer composed of a homodimer of the large subunit (R1) and a homodimer of the small subunit (R2). Larger multisubunit protein complex are also active, composed of (R1)n(R2)n. The cofactor is Fe cation.

The enzyme catalyses a 2'-deoxyribonucleoside 5'-diphosphate + [thioredoxin]-disulfide + H2O = a ribonucleoside 5'-diphosphate + [thioredoxin]-dithiol. In terms of biological role, ribonucleoside-diphosphate reductase holoenzyme provides the precursors necessary for viral DNA synthesis. Allows virus growth in non-dividing cells. Catalyzes the biosynthesis of deoxyribonucleotides from the corresponding ribonucleotides. This is Probable ribonucleoside-diphosphate reductase small subunit 048L from Invertebrate iridescent virus 3 (IIV-3).